A 656-amino-acid chain; its full sequence is DNA ligase (656 aa).

Residues 32-36 and 81-82 contribute to the NAD(+) site; these read DAVYD and SL. Lys-112 serves as the catalytic N6-AMP-lysine intermediate. Positions 133, 167, and 306 each coordinate NAD(+). Residues Cys-400, Cys-403, Cys-416, and Cys-421 each coordinate Zn(2+). The BRCT domain maps to 577–656; sequence KSSSVFSDKT…ELLKRLKELD (80 aa).

It belongs to the NAD-dependent DNA ligase family. LigA subfamily. It depends on Mg(2+) as a cofactor. Requires Mn(2+) as cofactor.

It carries out the reaction NAD(+) + (deoxyribonucleotide)n-3'-hydroxyl + 5'-phospho-(deoxyribonucleotide)m = (deoxyribonucleotide)n+m + AMP + beta-nicotinamide D-nucleotide.. In terms of biological role, DNA ligase that catalyzes the formation of phosphodiester linkages between 5'-phosphoryl and 3'-hydroxyl groups in double-stranded DNA using NAD as a coenzyme and as the energy source for the reaction. It is essential for DNA replication and repair of damaged DNA. In Helicobacter pylori (strain J99 / ATCC 700824) (Campylobacter pylori J99), this protein is DNA ligase.